The following is a 246-amino-acid chain: Probable 2-phosphosulfolactate phosphatase (246 aa).

It belongs to the ComB family. Mg(2+) is required as a cofactor.

The enzyme catalyses (2R)-O-phospho-3-sulfolactate + H2O = (2R)-3-sulfolactate + phosphate. This Nostoc punctiforme (strain ATCC 29133 / PCC 73102) protein is Probable 2-phosphosulfolactate phosphatase.